A 186-amino-acid chain; its full sequence is Ribosome-recycling factor (186 aa).

This sequence belongs to the RRF family.

The protein resides in the cytoplasm. Functionally, responsible for the release of ribosomes from messenger RNA at the termination of protein biosynthesis. May increase the efficiency of translation by recycling ribosomes from one round of translation to another. This chain is Ribosome-recycling factor, found in Janthinobacterium sp. (strain Marseille) (Minibacterium massiliensis).